The following is a 909-amino-acid chain: Epithelial discoidin domain-containing receptor 1 (909 aa).

Residues 1–18 (MGPEALSSLLLLLLVASG) form the signal peptide. Over 21 to 413 (DMKGHFDPAK…VAKAEGSPTA (393 aa)) the chain is Extracellular. The F5/8 type C domain occupies 31–181 (CRYALGMQDR…VCLRVELYGC (151 aa)). 2 disulfides stabilise this stretch: cysteine 31/cysteine 181 and cysteine 70/cysteine 173. Over residues 45–60 (SDISASSSWSDSTAAR) the composition is skewed to low complexity. Residues 45–65 (SDISASSSWSDSTAARHSSDG) form a disordered region. The tract at residues 188–363 (LSYTAPVGQT…LFSEISFISD (176 aa)) is DS-like domain. Residues asparagine 207, glutamine 226, aspartate 229, valine 231, tyrosine 249, and tyrosine 251 each coordinate Ca(2+). N-linked (GlcNAc...) asparagine glycosylation is present at asparagine 207. Asparagine 256 carries an N-linked (GlcNAc...) asparagine glycan. Residues cysteine 299 and cysteine 344 are joined by a disulfide bond. The Ca(2+) site is built by serine 356 and glutamate 357. N-linked (GlcNAc...) asparagine glycans are attached at residues asparagine 366 and asparagine 390. Residues 414 to 434 (ILIGCLVAIILLLLLIIALML) form a helical membrane-spanning segment. At 435–909 (WRLHWRRLLS…FLAEDALNTV (475 aa)) the chain is on the cytoplasmic side. The disordered stretch occupies residues 466–495 (ILINNRPGPREPPPYQEPRPRGNPPHSAPC). The segment covering 475-492 (REPPPYQEPRPRGNPPHS) has biased composition (pro residues). A PPxY motif motif is present at residues 477–480 (PPPY). Tyrosine 480, tyrosine 509, and tyrosine 516 each carry phosphotyrosine; by autocatalysis. In terms of domain architecture, Protein kinase spans 606–901 (LRFKEKLGEG…PPFSQLHRFL (296 aa)). Residue 612–620 (LGEGQFGEV) participates in ATP binding. Serine 627 bears the Phosphoserine mark. Lysine 651 is a binding site for ATP. Tyrosine 736 carries the phosphotyrosine; by autocatalysis modification. The active-site Proton acceptor is aspartate 762. 3 positions are modified to phosphotyrosine; by autocatalysis: tyrosine 788, tyrosine 792, and tyrosine 793.

This sequence belongs to the protein kinase superfamily. Tyr protein kinase family. Insulin receptor subfamily. Homodimer. Interacts (via PPxY motif) with WWC1 (via WW domains) in a collagen-regulated manner. Forms a tripartite complex with WWC1 and PRKCZ, but predominantly in the absence of collagen. Interacts (tyrosine phosphorylated) with SHC1. Interacts with SRC. Interacts with MYH9. Interacts with CDH1. Interacts with PTPN11. Interacts with NCK2. Post-translationally, autophosphorylated in response to fibrillar collagen binding.

It localises to the cell membrane. The enzyme catalyses L-tyrosyl-[protein] + ATP = O-phospho-L-tyrosyl-[protein] + ADP + H(+). In terms of biological role, tyrosine kinase that functions as a cell surface receptor for fibrillar collagen and regulates cell attachment to the extracellular matrix, remodeling of the extracellular matrix, cell migration, differentiation, survival and cell proliferation. Collagen binding triggers a signaling pathway that involves SRC and leads to the activation of MAP kinases. Regulates remodeling of the extracellular matrix by up-regulation of the matrix metalloproteinases MMP2, MMP7 and MMP9, and thereby facilitates cell migration and wound healing. Promotes smooth muscle cell migration, and thereby contributes to arterial wound healing. Also plays a role in tumor cell invasion. Phosphorylates PTPN11. Required for normal blastocyst implantation during pregnancy, for normal mammary gland differentiation and normal lactation. Required for normal ear morphology and normal hearing. The polypeptide is Epithelial discoidin domain-containing receptor 1 (DDR1) (Pan troglodytes (Chimpanzee)).